The chain runs to 309 residues: GATA transcription factor 25 (309 aa).

The disordered stretch occupies residues 1 to 35; that stretch reads MFGRHSIIPNNQIGTASASAGEDHVSASATSGHIP. Residues 8–18 are compositionally biased toward polar residues; that stretch reads IPNNQIGTASA. The Tify domain occupies 77-112; sequence PPEGANQLTISFRGQVYVFDAVGADKVDAVLSLLGG. Residues 146–188 form the CCT domain; that stretch reads RAQSLDRFRKKRNARCFEKKVRYGVRQEVALRMARNKGQFTSS. Positions 187–202 are enriched in polar residues; that stretch reads SSKMTDGAYNSGTDQD. A disordered region spans residues 187-207; the sequence is SSKMTDGAYNSGTDQDSAQDD. The GATA-type zinc-finger motif lies at 208–267; it reads AHPEISCTHCGISSKCTPMMRRGPSGPRTLCNACGLFWANRGTLRDLSKKTEENQLALMK. The disordered stretch occupies residues 290-309; the sequence is EHTSMVSLANGDNSNLLGDH. Over residues 293-309 the composition is skewed to polar residues; it reads SMVSLANGDNSNLLGDH.

This sequence belongs to the type IV zinc-finger family. Class C subfamily. In terms of tissue distribution, predominantly expressed in shoot apices, inflorescences and roots.

The protein resides in the nucleus. Functionally, transcriptional activator that specifically binds 5'-GATA-3' or 5'-GAT-3' motifs within gene promoters. This is GATA transcription factor 25 (GATA25) from Arabidopsis thaliana (Mouse-ear cress).